Here is a 461-residue protein sequence, read N- to C-terminus: Homocitrate synthase (461 aa).

One can recognise a Pyruvate carboxyltransferase domain in the interval 4-259 (VGILDSTLRE…IEVVKLDKLQ (256 aa)). Arg12 provides a ligand contact to 2-oxoglutarate. Glu13 contributes to the Mg(2+) binding site. The 2-oxoglutarate site is built by His76, Arg136, and Thr170. Positions 198 and 200 each coordinate Mg(2+). Catalysis depends on His292, which acts as the Proton acceptor.

Belongs to the alpha-IPM synthase/homocitrate synthase family. Homocitrate synthase LYS20/LYS21 subfamily. Mg(2+) serves as cofactor. It depends on Mn(2+) as a cofactor.

The enzyme catalyses acetyl-CoA + 2-oxoglutarate + H2O = (2R)-homocitrate + CoA + H(+). The protein operates within amino-acid biosynthesis; L-lysine biosynthesis via AAA pathway; L-alpha-aminoadipate from 2-oxoglutarate: step 1/5. Catalyzes the aldol-type condensation of 2-oxoglutarate with acetyl-CoA to yield homocitrate. Carries out the first step of the alpha-aminoadipate (AAA) lysine biosynthesis pathway. The polypeptide is Homocitrate synthase (Saccharolobus islandicus (strain Y.N.15.51 / Yellowstone #2) (Sulfolobus islandicus)).